Reading from the N-terminus, the 241-residue chain is Ureidoacrylate amidohydrolase RutB (241 aa).

The active-site Proton acceptor is Asp38. Lys147 is a catalytic residue. The active-site Nucleophile is Cys180.

Belongs to the isochorismatase family. RutB subfamily.

The catalysed reaction is (Z)-3-ureidoacrylate + H2O + H(+) = (Z)-3-aminoacrylate + NH4(+) + CO2. It catalyses the reaction (Z)-3-ureidoacrylate + H2O = (Z)-3-aminoacrylate + carbamate + H(+). It carries out the reaction (Z)-2-methylureidoacrylate + H2O + H(+) = (Z)-2-methylaminoacrylate + NH4(+) + CO2. In terms of biological role, hydrolyzes ureidoacrylate to form aminoacrylate and carbamate. The carbamate hydrolyzes spontaneously, thereby releasing one of the nitrogen atoms of the pyrimidine ring as ammonia and one of its carbon atoms as CO2. The polypeptide is Ureidoacrylate amidohydrolase RutB (Haliangium ochraceum (strain DSM 14365 / JCM 11303 / SMP-2)).